We begin with the raw amino-acid sequence, 693 residues long: DNA ligase (693 aa).

Residues 43–47, 92–93, and glutamate 123 contribute to the NAD(+) site; these read DEEYD and SL. The active-site N6-AMP-lysine intermediate is the lysine 125. The NAD(+) site is built by arginine 146, glutamate 180, lysine 296, and lysine 320. Zn(2+) contacts are provided by cysteine 414, cysteine 417, cysteine 433, and cysteine 438. Residues 595 to 684 form the BRCT domain; the sequence is VKYDVLKGLT…AKLKGYNFDE (90 aa).

Belongs to the NAD-dependent DNA ligase family. LigA subfamily. Requires Mg(2+) as cofactor. Mn(2+) serves as cofactor.

The enzyme catalyses NAD(+) + (deoxyribonucleotide)n-3'-hydroxyl + 5'-phospho-(deoxyribonucleotide)m = (deoxyribonucleotide)n+m + AMP + beta-nicotinamide D-nucleotide.. Functionally, DNA ligase that catalyzes the formation of phosphodiester linkages between 5'-phosphoryl and 3'-hydroxyl groups in double-stranded DNA using NAD as a coenzyme and as the energy source for the reaction. It is essential for DNA replication and repair of damaged DNA. This Thermotoga neapolitana (strain ATCC 49049 / DSM 4359 / NBRC 107923 / NS-E) protein is DNA ligase.